Consider the following 346-residue polypeptide: Histone H1.8 (346 aa).

Composition is skewed to low complexity over residues 1–23 (MAPG…SSRS) and 38–48 (PGGPSHSSLPV). Disordered stretches follow at residues 1–50 (MAPG…PVGR) and 121–346 (ATGS…RAEA). The H15 domain occupies 51-129 (RHPPVLRMVL…GATGSFKLVP (79 aa)). Basic residues predominate over residues 128-137 (VPKHKKKIQP). Over residues 148 to 167 (RAGEAKGKGPKKPSEAKEDP) the composition is skewed to basic and acidic residues. A Nuclear localization signal motif is present at residues 164–179 (KEDPPNVGKVKKAAKR). Positions 172-182 (KVKKAAKRPAK) are enriched in basic residues. Basic and acidic residues-rich tracts occupy residues 205 to 225 (KDTR…DKAM) and 251 to 262 (EAYRKTKAESKS). Positions 278–288 (TKKKVVAKAKA) are enriched in basic residues. Positions 298–309 (KAAAPAKGSGSK) are enriched in low complexity. Over residues 334 to 346 (ASSSKVSSQRAEA) the composition is skewed to polar residues.

It belongs to the histone H1/H5 family. Oocyte-specific.

It is found in the cytoplasm. The protein resides in the nucleus. Its subcellular location is the chromosome. In terms of biological role, may play a key role in the control of gene expression during oogenesis and early embryogenesis, presumably through the perturbation of chromatin structure. Essential for meiotic maturation of germinal vesicle-stage oocytes. The somatic type linker histone H1c is rapidly replaced by H1oo in a donor nucleus transplanted into an oocyte. The greater mobility of H1oo as compared to H1c may contribute to this rapid replacement and increased instability of the embryonic chromatin structure. The rapid replacement of H1c with H1oo may play an important role in nuclear remodeling. This Homo sapiens (Human) protein is Histone H1.8.